We begin with the raw amino-acid sequence, 718 residues long: Zinc finger protein 39 (718 aa).

A KRAB domain is found at 59–130 (VSFEDVSVDF…EDVPKQSRAD (72 aa)). Residues 298-320 (FECSICKKTFCTKCELMKHKKIH) form a C2H2-type 1 zinc finger. A C2H2-type 2; degenerate zinc finger spans residues 353-375 (HRCKQCEKCFHQKNQQNVHERVP). 11 consecutive C2H2-type zinc fingers follow at residues 409-431 (YGCNLCGKAFYRKSHLGRHQKIH), 437-459 (YGCEECKKTFYHKSSLTIHQRTH), 465-487 (YECKKCRKTFYCKSDLNVHHRTH), 493-515 (YECDECRKTFYSKSHLVIHQKVH), 521-543 (YECEECQKAFSRKSNLTVHQKTH), 549-571 (YECNVCGKTFHRQSHLNMHQGTH), 577-599 (YQCEECGKAFYQKSSLRRHQRNH), 605-627 (YACEECRKTFLHKSSLTVHQRSH), 633-655 (YSCEECRKTFYSKSHLTVHQRTH), 661-683 (YECKLCKKAFHQKSYLNRHQVTH), and 689-711 (FECQECRKTFYHKSSLTVHQRIH).

In terms of tissue distribution, predominantly in the spermatocytes and spermatids of testes.

Its subcellular location is the nucleus. Its function is as follows. A putative DNA-binding regulatory protein associated with meiosis in spermatogenesis. This chain is Zinc finger protein 39 (Zfp39), found in Mus musculus (Mouse).